Here is a 134-residue protein sequence, read N- to C-terminus: Profilin-5 (134 aa).

A disulfide bridge connects residues cysteine 13 and cysteine 118. The short motif at alanine 84–threonine 100 is the Involved in PIP2 interaction element. The residue at position 114 (threonine 114) is a Phosphothreonine.

The protein belongs to the profilin family. As to quaternary structure, occurs in many kinds of cells as a complex with monomeric actin in a 1:1 ratio. Post-translationally, phosphorylated by MAP kinases.

The protein localises to the cytoplasm. It is found in the cytoskeleton. Functionally, binds to actin and affects the structure of the cytoskeleton. At high concentrations, profilin prevents the polymerization of actin, whereas it enhances it at low concentrations. In Olea europaea (Common olive), this protein is Profilin-5.